The following is a 427-amino-acid chain: Endothelin-1 receptor (427 aa).

An N-terminal signal peptide occupies residues 1 to 20 (METLCLRASFWLALVGCVIS). Residues 21 to 80 (DNPERYSTNLSNHVDDFTTFRGTELSFLVTTHQPTNLVLPSNGSMHNYCPQQTKITSAFK) lie on the Extracellular side of the membrane. Asparagine 29 and asparagine 62 each carry an N-linked (GlcNAc...) asparagine glycan. Residues 81–102 (YINTVISCTIFIVGMVGNATLL) form a helical membrane-spanning segment. Topologically, residues 103–112 (RIIYQNKCMR) are cytoplasmic. The helical transmembrane segment at 113-132 (NGPNALIASLALGDLIYVVI) threads the bilayer. The Extracellular segment spans residues 133-159 (DLPINVFKLLAGRWPFDHNDFGVFLCK). Cysteine 158 and cysteine 239 are oxidised to a cystine. The chain crosses the membrane as a helical span at residues 160–181 (LFPFLQKSSVGITVLNLCALSV). The Cytoplasmic portion of the chain corresponds to 182-205 (DRYRAVASWSRVQGIGIPLVTAIE). A helical membrane pass occupies residues 206 to 229 (IVSIWILSFILAIPEAIGFVMVPF). Topologically, residues 230 to 256 (EYRGEQHKTCMLNATSKFMEFYQDVKD) are extracellular. A helical membrane pass occupies residues 257 to 278 (WWLFGFYFCMPLVCTAIFYTLM). Over 279–306 (TCEMLNRRNGSLRIALSEHLKQRREVAK) the chain is Cytoplasmic. The helical transmembrane segment at 307–328 (TVFCLVVIFALCWFPLHLSRIL) threads the bilayer. At 329-347 (KKTVYNEMDKNRCELLSFL) the chain is on the extracellular side. The helical transmembrane segment at 348–372 (LLMDYIGINLATMNSCINPIALYFV) threads the bilayer. The Cytoplasmic segment spans residues 373 to 427 (SKKFKNCFQSCLCCCCYQSKSLMTSVPMNGTSIQWKNHDQNNHNTDRSSHKDSMN). The tract at residues 406–427 (QWKNHDQNNHNTDRSSHKDSMN) is disordered. Residues 408-427 (KNHDQNNHNTDRSSHKDSMN) show a composition bias toward basic and acidic residues. Phosphoserine is present on serine 425.

Belongs to the G-protein coupled receptor 1 family. Endothelin receptor subfamily. EDNRA sub-subfamily. In terms of assembly, interacts with HDAC7 and KAT5. Isoform 1, isoform 3 and isoform 4 are expressed in a variety of tissues, with highest levels in the aorta and cerebellum, followed by lung, atrium and cerebral cortex, lower levels in the placenta, kidney, adrenal gland, duodenum, colon, ventricle and liver but no expression in umbilical vein endothelial cells. Within the placenta, isoform 1, isoform 2, isoform 3 and isoform 4 are expressed in the villi and stem villi vessels.

The protein localises to the cell membrane. In terms of biological role, receptor for endothelin-1. Mediates its action by association with G proteins that activate a phosphatidylinositol-calcium second messenger system. The rank order of binding affinities for ET-A is: ET1 &gt; ET2 &gt;&gt; ET3. This chain is Endothelin-1 receptor, found in Homo sapiens (Human).